The sequence spans 196 residues: GTP cyclohydrolase-2 (196 aa).

Residue 49 to 53 (RVHSE) coordinates GTP. Residues cysteine 54, cysteine 65, and cysteine 67 each contribute to the Zn(2+) site. Residues glutamine 70, 92 to 94 (EGR), and threonine 114 each bind GTP. Residue aspartate 126 is the Proton acceptor of the active site. Arginine 128 acts as the Nucleophile in catalysis. Positions 149 and 154 each coordinate GTP.

The protein belongs to the GTP cyclohydrolase II family. Homodimer. It depends on Zn(2+) as a cofactor.

It carries out the reaction GTP + 4 H2O = 2,5-diamino-6-hydroxy-4-(5-phosphoribosylamino)-pyrimidine + formate + 2 phosphate + 3 H(+). It functions in the pathway cofactor biosynthesis; riboflavin biosynthesis; 5-amino-6-(D-ribitylamino)uracil from GTP: step 1/4. Catalyzes the conversion of GTP to 2,5-diamino-6-ribosylamino-4(3H)-pyrimidinone 5'-phosphate (DARP), formate and pyrophosphate. The sequence is that of GTP cyclohydrolase-2 from Escherichia coli O127:H6 (strain E2348/69 / EPEC).